The primary structure comprises 276 residues: NADPH-dependent 7-cyano-7-deazaguanine reductase (276 aa).

83-85 serves as a coordination point for substrate; that stretch reads IES. 85 to 86 contacts NADPH; sequence SK. C184 acts as the Thioimide intermediate in catalysis. D191 functions as the Proton donor in the catalytic mechanism. 223 to 224 is a binding site for substrate; sequence HE. 252–253 lines the NADPH pocket; sequence RG.

This sequence belongs to the GTP cyclohydrolase I family. QueF type 2 subfamily. In terms of assembly, homodimer.

Its subcellular location is the cytoplasm. The enzyme catalyses 7-aminomethyl-7-carbaguanine + 2 NADP(+) = 7-cyano-7-deazaguanine + 2 NADPH + 3 H(+). The protein operates within tRNA modification; tRNA-queuosine biosynthesis. In terms of biological role, catalyzes the NADPH-dependent reduction of 7-cyano-7-deazaguanine (preQ0) to 7-aminomethyl-7-deazaguanine (preQ1). The sequence is that of NADPH-dependent 7-cyano-7-deazaguanine reductase from Pseudomonas syringae pv. tomato (strain ATCC BAA-871 / DC3000).